Reading from the N-terminus, the 1188-residue chain is DNA-directed RNA polymerase subunit beta (1188 aa).

A disordered region spans residues 1149–1188; that stretch reads ELRDLDEGEDDDVMHVDDLEKAREKQAQETPEVSENSEEK. The segment covering 1161 to 1175 has biased composition (basic and acidic residues); that stretch reads VMHVDDLEKAREKQA.

The protein belongs to the RNA polymerase beta chain family. The RNAP catalytic core consists of 2 alpha, 1 beta, 1 beta' and 1 omega subunit. When a sigma factor is associated with the core the holoenzyme is formed, which can initiate transcription.

The enzyme catalyses RNA(n) + a ribonucleoside 5'-triphosphate = RNA(n+1) + diphosphate. Its function is as follows. DNA-dependent RNA polymerase catalyzes the transcription of DNA into RNA using the four ribonucleoside triphosphates as substrates. This is DNA-directed RNA polymerase subunit beta from Streptococcus uberis (strain ATCC BAA-854 / 0140J).